The chain runs to 475 residues: SAM50-like protein SPAC17C9.06 (475 aa).

Positions 44–130 (VGISSIRVTG…LDVTIQVKEK (87 aa)) constitute a POTRA domain.

It belongs to the SAM50/omp85 family. As to quaternary structure, associates with the mitochondrial contact site and cristae organizing system (MICOS) complex (also known as MINOS or MitOS complex).

The protein resides in the mitochondrion outer membrane. May be required for the assembly pathway of mitochondrial outer membrane proteins. The sequence is that of SAM50-like protein SPAC17C9.06 from Schizosaccharomyces pombe (strain 972 / ATCC 24843) (Fission yeast).